Here is a 327-residue protein sequence, read N- to C-terminus: MAMTAEVKDELSRLVVNSVSARRAEVASLLRFAGGLHIVSGRVVVEAEVDLGIIARRLRKDIYDLYGYNAVVHVLSASGIRKSTRYVVRVAKDGEALARQTGLLDLRGRPVRGLPAQVVGGSVGDAEAAWRGAFLAHGSLTEPGRSSALEVSCPGPEAALALVGAARRLGVSAKAREVRGSDRVVVRDGEAIGALLTRMGAQDTRLTWEERRMRREVRATANRLANFDDANLRRSARAAVAAAARVERALQILGDTVPDHLAAAGNLRVAHRQASLEELGRLADPPMTKDAVAGRIRRLLSMADRKAKQDGIPDTESAVTPDLLEDA.

Positions 277 to 310 (EELGRLADPPMTKDAVAGRIRRLLSMADRKAKQD) form a DNA-binding region, H-T-H motif. The segment at 304–327 (DRKAKQDGIPDTESAVTPDLLEDA) is disordered.

This sequence belongs to the WhiA family.

Involved in cell division and chromosome segregation. The protein is Probable cell division protein WhiA of Mycolicibacterium vanbaalenii (strain DSM 7251 / JCM 13017 / BCRC 16820 / KCTC 9966 / NRRL B-24157 / PYR-1) (Mycobacterium vanbaalenii).